The primary structure comprises 129 residues: ATP synthase epsilon chain (129 aa).

This sequence belongs to the ATPase epsilon chain family. As to quaternary structure, F-type ATPases have 2 components, CF(1) - the catalytic core - and CF(0) - the membrane proton channel. CF(1) has five subunits: alpha(3), beta(3), gamma(1), delta(1), epsilon(1). CF(0) has three main subunits: a, b and c.

It is found in the cell inner membrane. In terms of biological role, produces ATP from ADP in the presence of a proton gradient across the membrane. The protein is ATP synthase epsilon chain of Campylobacter curvus (strain 525.92).